The primary structure comprises 236 residues: Eukaryotic translation initiation factor 3 subunit J (236 aa).

Residues 1–88 (MADDWESAAD…EAEAQRVASL (88 aa)) form a disordered region. A compositionally biased stretch (acidic residues) spans 28–46 (GEDEDEDIKDSWEDEEEKK). Composition is skewed to basic and acidic residues over residues 47-58 (DEEKPTKTEAPA) and 68-77 (AKLEQQARLE).

Belongs to the eIF-3 subunit J family. As to quaternary structure, component of the eukaryotic translation initiation factor 3 (eIF-3) complex. The eIF-3 complex interacts with pix.

Its subcellular location is the cytoplasm. Component of the eukaryotic translation initiation factor 3 (eIF-3) complex, which is involved in protein synthesis of a specialized repertoire of mRNAs and, together with other initiation factors, stimulates binding of mRNA and methionyl-tRNAi to the 40S ribosome. The eIF-3 complex specifically targets and initiates translation of a subset of mRNAs involved in cell proliferation. The chain is Eukaryotic translation initiation factor 3 subunit J from Drosophila erecta (Fruit fly).